A 517-amino-acid polypeptide reads, in one-letter code: GMP synthase [glutamine-hydrolyzing] (517 aa).

The 192-residue stretch at 11–202 folds into the Glutamine amidotransferase type-1 domain; the sequence is KIIVLDYGSQ…AFDICKAEAN (192 aa). Catalysis depends on C88, which acts as the Nucleophile. Active-site residues include H176 and E178. The GMPS ATP-PPase domain maps to 203–392; that stretch reads WSMDDFITKQ…LGMPHALVWR (190 aa). 230-236 provides a ligand contact to ATP; it reads SGGVDSS.

Homodimer.

The enzyme catalyses XMP + L-glutamine + ATP + H2O = GMP + L-glutamate + AMP + diphosphate + 2 H(+). It functions in the pathway purine metabolism; GMP biosynthesis; GMP from XMP (L-Gln route): step 1/1. Functionally, catalyzes the synthesis of GMP from XMP. The sequence is that of GMP synthase [glutamine-hydrolyzing] from Lacticaseibacillus casei (strain BL23) (Lactobacillus casei).